We begin with the raw amino-acid sequence, 293 residues long: Large ribosomal RNA subunit accumulation protein YCED homolog 1, chloroplastic (293 aa).

Residues 1 to 42 (MYYPQPTVSLAAAVALLRPSLRRHSQRASSLLRSSTPPPWVS) constitute a chloroplast transit peptide.

The protein belongs to the DUF177 domain family. As to expression, highly expressed in shoots and leaves. Detected in roots, embryos and endosperm.

The protein resides in the plastid. It localises to the chloroplast. Its function is as follows. Plays a role in synthesis, processing and/or stability of 23S rRNA. Required for embryogenesis. May be involved in RPL23 transcript levels regulation in non-photosynthetic plastids. This is Large ribosomal RNA subunit accumulation protein YCED homolog 1, chloroplastic from Zea mays (Maize).